A 337-amino-acid chain; its full sequence is Glyceraldehyde-3-phosphate dehydrogenase 3, cytosolic (337 aa).

Residues 13 to 14 (RI), D35, and R82 each bind NAD(+). D-glyceraldehyde 3-phosphate contacts are provided by residues 153–155 (SCT), T184, 213–214 (TG), and R236. C154 serves as the catalytic Nucleophile. N318 is a binding site for NAD(+).

This sequence belongs to the glyceraldehyde-3-phosphate dehydrogenase family. As to quaternary structure, homotetramer.

Its subcellular location is the cytoplasm. It carries out the reaction D-glyceraldehyde 3-phosphate + phosphate + NAD(+) = (2R)-3-phospho-glyceroyl phosphate + NADH + H(+). Its pathway is carbohydrate degradation; glycolysis; pyruvate from D-glyceraldehyde 3-phosphate: step 1/5. Key enzyme in glycolysis that catalyzes the first step of the pathway by converting D-glyceraldehyde 3-phosphate (G3P) into 3-phospho-D-glyceroyl phosphate. Essential for the maintenance of cellular ATP levels and carbohydrate metabolism. This is Glyceraldehyde-3-phosphate dehydrogenase 3, cytosolic (GAPC3) from Oryza sativa subsp. japonica (Rice).